Here is a 120-residue protein sequence, read N- to C-terminus: NAD(P)H-quinone oxidoreductase subunit 3, chloroplastic (120 aa).

A run of 3 helical transmembrane segments spans residues L14–I34, M64–M84, and V88–S108.

The protein belongs to the complex I subunit 3 family. In terms of assembly, NDH is composed of at least 16 different subunits, 5 of which are encoded in the nucleus.

It localises to the plastid. The protein localises to the chloroplast thylakoid membrane. The catalysed reaction is a plastoquinone + NADH + (n+1) H(+)(in) = a plastoquinol + NAD(+) + n H(+)(out). It catalyses the reaction a plastoquinone + NADPH + (n+1) H(+)(in) = a plastoquinol + NADP(+) + n H(+)(out). In terms of biological role, NDH shuttles electrons from NAD(P)H:plastoquinone, via FMN and iron-sulfur (Fe-S) centers, to quinones in the photosynthetic chain and possibly in a chloroplast respiratory chain. The immediate electron acceptor for the enzyme in this species is believed to be plastoquinone. Couples the redox reaction to proton translocation, and thus conserves the redox energy in a proton gradient. This is NAD(P)H-quinone oxidoreductase subunit 3, chloroplastic from Cicer arietinum (Chickpea).